Consider the following 132-residue polypeptide: uncharacterized protein (132 aa).

3 helical membrane passes run 28–48 (LLRLISLCIPIIRPFSFLIYP), 59–79 (ILPSILPIIPFAISSSLLFSY), and 106–126 (LLVASFVYLPYRSPLPVVIEI).

The protein localises to the membrane. This is an uncharacterized protein from Schizosaccharomyces pombe (strain 972 / ATCC 24843) (Fission yeast).